Reading from the N-terminus, the 62-residue chain is Translational regulator CsrA 3 (62 aa).

This sequence belongs to the CsrA/RsmA family. In terms of assembly, homodimer; the beta-strands of each monomer intercalate to form a hydrophobic core, while the alpha-helices form wings that extend away from the core.

The protein localises to the cytoplasm. A key translational regulator that binds mRNA to regulate translation initiation and/or mRNA stability. Mediates global changes in gene expression, shifting from rapid growth to stress survival by linking envelope stress, the stringent response and the catabolite repression systems. Usually binds in the 5'-UTR; binding at or near the Shine-Dalgarno sequence prevents ribosome-binding, repressing translation, binding elsewhere in the 5'-UTR can activate translation and/or stabilize the mRNA. Its function is antagonized by small RNA(s). The polypeptide is Translational regulator CsrA 3 (Pseudomonas syringae pv. tomato (strain ATCC BAA-871 / DC3000)).